A 279-amino-acid chain; its full sequence is Protein phosphatase 1 regulatory subunit 3E (279 aa).

Phosphoserine occurs at positions 16 and 33. A disordered region spans residues 28 to 86 (RSQRPSLEEEPEEEPGEGGTRFGARSRAHAPSRGRRARSAPAGGGGARAPRSRSPDTRK). Basic residues predominate over residues 51 to 65 (ARSRAHAPSRGRRAR). S66 is modified (phosphoserine). The PP1-binding motif motif lies at 87-90 (RVRF). The region spanning 154–259 (AARLLTQRIC…NNGGRDYALR (106 aa)) is the CBM21 domain. Positions 176–198 (GSARVVDLAYEKRVSVRWSADGW) are glycogen-binding motif. The tract at residues 248–256 (WDNNGGRDY) is substrate-binding motif.

As to expression, expressed in skeletal muscle and heart with barely detectable levels in liver.

Its function is as follows. Acts as a glycogen-targeting subunit for PP1. PP1 is involved in glycogen metabolism and contributes to the activation of glycogen synthase leading to an increase in glycogen synthesis. In Homo sapiens (Human), this protein is Protein phosphatase 1 regulatory subunit 3E (PPP1R3E).